The primary structure comprises 605 residues: 9-cis-epoxycarotenoid dioxygenase NCED1, chloroplastic (605 aa).

Residues 1-16 constitute a chloroplast transit peptide; it reads MATTTSHATNTWIKTK. Positions 55–89 are disordered; the sequence is ILHFPKQSSNYQTPKNNTISHPKQENNNSSSSSTS. A compositionally biased stretch (polar residues) spans 60 to 75; it reads KQSSNYQTPKNNTISH. Residues 80–89 show a composition bias toward low complexity; it reads NNNSSSSSTS. His302, His351, His416, and His592 together coordinate Fe cation.

Belongs to the carotenoid oxygenase family. Fe(2+) is required as a cofactor. Expressed in developing and ripening fruits. Highly expressed in pulp. Observed in unpollinated ovaries (e.g. ovules, placenta and pericarp). Expressed in flowers.

It localises to the plastid. The protein resides in the chloroplast stroma. The catalysed reaction is a 9-cis-epoxycarotenoid + O2 = a 12'-apo-carotenal + 2-cis,4-trans-xanthoxin. It carries out the reaction 9-cis-violaxanthin + O2 = (3S,5R,6S)-5,6-epoxy-3-hydroxy-5,6-dihydro-12'-apo-beta-caroten-12'-al + 2-cis,4-trans-xanthoxin. It catalyses the reaction 9'-cis-neoxanthin + O2 = (3S,5R,6R)-3,5-dihydroxy-6,7-didehydro-5,6-dihydro-12'-apo-beta-caroten-12'-al + 2-cis,4-trans-xanthoxin. It participates in plant hormone biosynthesis; abscisate biosynthesis. Its function is as follows. Has a 11,12(11',12') 9-cis epoxycarotenoid cleavage activity. Catalyzes the first step of abscisic-acid (ABA) biosynthesis from carotenoids. Required for ABA accumulation upon drought. Required for ABA-mediated regulation of anther/pollen development, including metabolism, cell wall modification and transcription level. Positive regulator of fruit ripening involved in the biosynthesis of abscisic acid (ABA); initiates ABA biosynthesis at the onset of fruit ripening. Modulates the degree of pigmentation and carotenoid composition as well as pectin catabolism during ripening and may regulate the ethylene production and action in climacteric tomato fruit. The polypeptide is 9-cis-epoxycarotenoid dioxygenase NCED1, chloroplastic (Solanum lycopersicum (Tomato)).